The sequence spans 221 residues: N-acetyltransferase 8F1 (221 aa).

Residues 53–73 form a helical membrane-spanning segment; it reads LVLVSGSWLLAVVCIFFLLLL. An N-acetyltransferase domain is found at 69-219; the sequence is FLLLLLRFLA…RTIQLKYPFP (151 aa).

The protein belongs to the camello family.

The protein localises to the membrane. Functionally, may play a role in regulation of gastrulation. This is N-acetyltransferase 8F1 from Rattus norvegicus (Rat).